Consider the following 610-residue polypeptide: Zinc finger protein 823 (610 aa).

In terms of domain architecture, KRAB spans 4–97; the sequence is VAFEDVAVNF…VNKNTPRVNP (94 aa). C2H2-type zinc fingers lie at residues 164-186, 192-214, 220-242, 248-270, 276-298, 304-326, 332-354, 360-382, 388-410, and 416-438; these read FDCK…MAAH, YKCK…ERTH, YECK…ERIH, YECK…ERTH, YKCT…ERTH, YACK…MIRH, HKCK…ETTH, YECK…MITH, QKCK…ERTH, and YQCK…EATH. Residues 444–465 form a C2H2-type 11; atypical zinc finger; that stretch reads YKCQCGKAFSDLSSFQNHETTH. C2H2-type zinc fingers lie at residues 471–493, 499–521, 527–549, 555–577, and 583–605; these read YECK…KRTH, YECK…ERIH, and YECL…EKTH.

This sequence belongs to the krueppel C2H2-type zinc-finger protein family.

Its subcellular location is the nucleus. In terms of biological role, may be involved in transcriptional regulation. This Homo sapiens (Human) protein is Zinc finger protein 823 (ZNF823).